Here is a 152-residue protein sequence, read N- to C-terminus: Putative pre-16S rRNA nuclease (152 aa).

This sequence belongs to the YqgF nuclease family.

The protein localises to the cytoplasm. In terms of biological role, could be a nuclease involved in processing of the 5'-end of pre-16S rRNA. The protein is Putative pre-16S rRNA nuclease of Bifidobacterium longum (strain DJO10A).